Consider the following 245-residue polypeptide: Orotidine 5'-phosphate decarboxylase (245 aa).

Residues Asp22, Lys44, 71 to 80 (DLKFHDIPNT), Thr131, Arg192, Gln201, Gly221, and Arg222 contribute to the substrate site. Lys73 (proton donor) is an active-site residue.

It belongs to the OMP decarboxylase family. Type 1 subfamily. In terms of assembly, homodimer.

It catalyses the reaction orotidine 5'-phosphate + H(+) = UMP + CO2. The protein operates within pyrimidine metabolism; UMP biosynthesis via de novo pathway; UMP from orotate: step 2/2. Its function is as follows. Catalyzes the decarboxylation of orotidine 5'-monophosphate (OMP) to uridine 5'-monophosphate (UMP). In Salmonella newport (strain SL254), this protein is Orotidine 5'-phosphate decarboxylase.